Reading from the N-terminus, the 600-residue chain is Monooxygenase ptmN (600 aa).

Belongs to the FMO family. FAD serves as cofactor.

Its pathway is secondary metabolite biosynthesis. Its function is as follows. Monooxygenase; part of the gene cluster that mediates the biosynthesis of the indole diterpenes penitrems. The geranylgeranyl diphosphate (GGPP) synthase ptmG catalyzes the first step in penitrem biosynthesis via conversion of farnesyl pyrophosphate and isopentyl pyrophosphate into geranylgeranyl pyrophosphate (GGPP). Condensation of indole-3-glycerol phosphate with GGPP by the prenyl transferase ptmC then forms 3-geranylgeranylindole (3-GGI). Epoxidation by the FAD-dependent monooxygenase ptmM leads to a epoxidized-GGI that is substrate of the terpene cyclase ptmB for cyclization to yield paspaline. Paspaline is subsequently converted to 13-desoxypaxilline by the cytochrome P450 monooxygenase ptmP, the latter being then converted to paxilline by the cytochrome P450 monooxygenase ptmQ. Paxilline is converted to beta-paxitriol via C-10 ketoreduction by the short-chain dehydrogenase ptmH which can be monoprenylated at the C-20 by the indole diterpene prenyltransferase ptmD. A two-step elimination (acetylation and elimination) process performed by the O-acetyltransferase ptmV and ptmI leads to the production of the prenylated form of penijanthine. The FAD-linked oxidoreductase ptmO then converts the prenylated form of penijanthine into PC-M5 which is in turn transformed into PC-M4 by the aromatic dimethylallyltransferase ptmE. Five sequential oxidative transformations performed by the cytochrome P450 monooxygenases ptmK, ptmU, ptmL, ptmN and ptmJ yield the various penitrem compounds. PtmK, ptmU and ptmM are involved in the formation of the key bicyclic ring of penitrem C via the formation of the intermediates secopenitrem D and penitrem D. PtmL catalyzes the epoxidation of penitrem D and C to yield penitrem B and F, respectively. PtmJ catalyzes the last benzylic hydroxylation to convert penitrem B to prenitrem E and penitrem F to penitrem A. The protein is Monooxygenase ptmN of Penicillium ochrochloron.